We begin with the raw amino-acid sequence, 125 residues long: Upsalin (125 aa).

A signal peptide spans 1 to 16 (MFPTHVLLIVIACVTA).

Weakly glycosylated. As to expression, expressed at highest levels in mantle, followed by adductor muscle. Found in the nacreous shell layer (at protein level).

It is found in the secreted. The sequence is that of Upsalin from Unio pictorum (Painter's mussel).